We begin with the raw amino-acid sequence, 79 residues long: Small ribosomal subunit protein bS18 (79 aa).

It belongs to the bacterial ribosomal protein bS18 family. As to quaternary structure, part of the 30S ribosomal subunit. Forms a tight heterodimer with protein bS6.

Functionally, binds as a heterodimer with protein bS6 to the central domain of the 16S rRNA, where it helps stabilize the platform of the 30S subunit. This chain is Small ribosomal subunit protein bS18, found in Streptococcus thermophilus (strain CNRZ 1066).